Reading from the N-terminus, the 189-residue chain is Protein GrpE (189 aa).

Residues 1–21 (MADEQNLDNQNPETPEQSQAD) form a disordered region. Polar residues predominate over residues 7-20 (LDNQNPETPEQSQA).

The protein belongs to the GrpE family. In terms of assembly, homodimer.

The protein localises to the cytoplasm. Its function is as follows. Participates actively in the response to hyperosmotic and heat shock by preventing the aggregation of stress-denatured proteins, in association with DnaK and GrpE. It is the nucleotide exchange factor for DnaK and may function as a thermosensor. Unfolded proteins bind initially to DnaJ; upon interaction with the DnaJ-bound protein, DnaK hydrolyzes its bound ATP, resulting in the formation of a stable complex. GrpE releases ADP from DnaK; ATP binding to DnaK triggers the release of the substrate protein, thus completing the reaction cycle. Several rounds of ATP-dependent interactions between DnaJ, DnaK and GrpE are required for fully efficient folding. The polypeptide is Protein GrpE (Stutzerimonas stutzeri (strain A1501) (Pseudomonas stutzeri)).